The chain runs to 141 residues: Flagellar assembly factor FliW (141 aa).

Belongs to the FliW family. In terms of assembly, interacts with translational regulator CsrA and flagellin(s).

It is found in the cytoplasm. Its function is as follows. Acts as an anti-CsrA protein, binds CsrA and prevents it from repressing translation of its target genes, one of which is flagellin. Binds to flagellin and participates in the assembly of the flagellum. This is Flagellar assembly factor FliW from Clostridium acetobutylicum (strain ATCC 824 / DSM 792 / JCM 1419 / IAM 19013 / LMG 5710 / NBRC 13948 / NRRL B-527 / VKM B-1787 / 2291 / W).